The following is a 598-amino-acid chain: Auxin response factor 22 (598 aa).

A DNA-binding region (TF-B3) is located at residues 124 to 226 (NSFTKVLTAS…ELRVGIRRAG (103 aa)). Residues 509-590 (RTCTKVQMQG…MVKKILIFKR (82 aa)) form the PB1 domain.

The protein belongs to the ARF family. As to quaternary structure, homodimers and heterodimers.

The protein resides in the nucleus. Auxin response factors (ARFs) are transcriptional factors that bind specifically to the DNA sequence 5'-TGTCTC-3' found in the auxin-responsive promoter elements (AuxREs). Could act as transcriptional activator or repressor. Formation of heterodimers with Aux/IAA proteins may alter their ability to modulate early auxin response genes expression. This Arabidopsis thaliana (Mouse-ear cress) protein is Auxin response factor 22 (ARF22).